Here is a 417-residue protein sequence, read N- to C-terminus: Phosphoglycerate kinase (417 aa).

Positions 23, 24, 25, 26, 38, 39, 62, 63, 65, 66, 121, 122, 169, and 170 each coordinate (2R)-3-phosphoglycerate. ADP is bound at residue Gly213. Residue Gly213 coordinates CDP. AMP contacts are provided by Ala214 and Lys215. Ala214 contributes to the ATP binding site. Ala214 is a Mg(2+) binding site. Asp218 is a CDP binding site. Asp218 provides a ligand contact to Mg(2+). Lys219 provides a ligand contact to AMP. Lys219 serves as a coordination point for ATP. Gly237 provides a ligand contact to ADP. Gly237 contributes to the CDP binding site. Residues Gly238 and Gly312 each coordinate AMP. ATP contacts are provided by Gly238 and Gly312. CDP is bound by residues Gly337 and Phe342. ADP is bound at residue Phe342. Residue Glu343 participates in AMP binding. 3 residues coordinate ATP: Glu343, Asp374, and Thr375. Asp374 is a binding site for Mg(2+).

It belongs to the phosphoglycerate kinase family. Monomer. Mg(2+) is required as a cofactor.

The protein localises to the cytoplasm. Its subcellular location is the mitochondrion. The enzyme catalyses (2R)-3-phosphoglycerate + ATP = (2R)-3-phospho-glyceroyl phosphate + ADP. Its pathway is carbohydrate degradation; glycolysis; pyruvate from D-glyceraldehyde 3-phosphate: step 2/5. Functionally, catalyzes one of the two ATP producing reactions in the glycolytic pathway via the reversible conversion of 1,3-diphosphoglycerate to 3-phosphoglycerate. Both L- and D- forms of purine and pyrimidine nucleotides can be used as substrates, but the activity is much lower on pyrimidines. Negatively regulates the biosynthesis of acetyl-CoA from pyruvate in the mitochondrion. The chain is Phosphoglycerate kinase (PGK1) from Yarrowia lipolytica (strain CLIB 122 / E 150) (Yeast).